The sequence spans 269 residues: Dynein regulatory complex protein 8 (269 aa).

The disordered stretch occupies residues 1 to 113 (MLGPGQVRLR…RTGKGLGYNS (113 aa)). A compositionally biased stretch (low complexity) spans 54–76 (AQGSSSPGIQSGPSSRPGSPRGA). EF-hand domains are found at residues 150-185 (EFHKKIKEAFEVFDHESNNTVDVREIGTIIRSLGCC) and 228-263 (IPEDVLLRAFEVLDSAKRGFLTKDELIKYMTEEDGV).

Belongs to the DRC8 family. As to quaternary structure, component of the nexin-dynein regulatory complex (N-DRC).

It is found in the cytoplasm. Its subcellular location is the cytoskeleton. The protein resides in the flagellum axoneme. Component of the nexin-dynein regulatory complex (N-DRC), a key regulator of ciliary/flagellar motility which maintains the alignment and integrity of the distal axoneme and regulates microtubule sliding in motile axonemes. The polypeptide is Dynein regulatory complex protein 8 (EFCAB2) (Homo sapiens (Human)).